A 519-amino-acid polypeptide reads, in one-letter code: Serine/threonine-protein kinase RIO3 (519 aa).

Phosphoserine occurs at positions 8 and 112. Position 122 is a phosphotyrosine (Tyr122). The interval 122–159 (YEDSDSSEDEVDWQDTRDDPYRPAKPIPTPKKGFIGKG) is disordered. Residues 124-134 (DSDSSEDEVDW) show a composition bias toward acidic residues. A phosphoserine mark is found at Ser125, Ser127, and Ser128. One can recognise a Protein kinase domain in the interval 251 to 519 (ETITGCISTG…DGGPPILYDE (269 aa)). ATP is bound by residues 257–265 (ISTGKESVV) and Lys290. The Proton acceptor role is filled by Asp406.

Belongs to the protein kinase superfamily. RIO-type Ser/Thr kinase family. Interacts with CASP10. Interacts with IRF3; RIOK3 probably mediates the interaction of TBK1 with IRF3. Associated with 40S pre-ribosomal particles. Mg(2+) serves as cofactor. Autophosphorylated (in vitro).

It is found in the cytoplasm. The enzyme catalyses L-seryl-[protein] + ATP = O-phospho-L-seryl-[protein] + ADP + H(+). The catalysed reaction is L-threonyl-[protein] + ATP = O-phospho-L-threonyl-[protein] + ADP + H(+). Its function is as follows. Involved in regulation of type I interferon (IFN)-dependent immune response which plays a critical role in the innate immune response against DNA and RNA viruses. May act as an adapter protein essential for the recruitment of TBK1 to IRF3. Phosphorylates IFIH1 within the C-terminal region interfering with IFIH1 filament assembly on long dsRNA and resulting in attenuated IFIH1-signaling. Can inhibit CASP10 isoform 7-mediated activation of the NF-kappaB signaling pathway. May play a role in the biogenesis of the 40S ribosomal subunit. Involved in the processing of 21S pre-rRNA to the mature 18S rRNA. This chain is Serine/threonine-protein kinase RIO3 (RIOK3), found in Bos taurus (Bovine).